The sequence spans 279 residues: Malonyl-[acyl-carrier protein] O-methyltransferase (279 aa).

Belongs to the methyltransferase superfamily.

The catalysed reaction is malonyl-[ACP] + S-adenosyl-L-methionine = malonyl-[ACP] methyl ester + S-adenosyl-L-homocysteine. It functions in the pathway cofactor biosynthesis; biotin biosynthesis. In terms of biological role, converts the free carboxyl group of a malonyl-thioester to its methyl ester by transfer of a methyl group from S-adenosyl-L-methionine (SAM). It allows to synthesize pimeloyl-ACP via the fatty acid synthetic pathway. This Hahella chejuensis (strain KCTC 2396) protein is Malonyl-[acyl-carrier protein] O-methyltransferase.